Reading from the N-terminus, the 229-residue chain is Matrix protein (229 aa).

The dynamin binding signature appears at Q2–L4. A PPXY motif motif is present at residues P30–Y33. The PTAP/PSAP motif motif lies at P42 to P45.

It belongs to the vesiculoviruses matrix protein family. As to quaternary structure, homomultimer. Interacts with viral nucleocapsid; this interaction contributes to the virion assembly. Interacts with the viral envelope glycoprotein; this interaction contributes to the virion assembly. Interacts with host RAE1-NUP98 complex. Interacts with host NEDD4 and TSG101. Interacts with host dynamin. Interacts with host NDUFAF4; the interaction inhibits viral propagation and is independent of interferon activation. Interacts with host GTF2H5; the interaction may inhibit host transcription. Interacts with host DRG1. Interaction with host CTDNEP1. Interaction with host ABCE1. In terms of processing, phosphorylated by host.

It is found in the virion. Its subcellular location is the host endomembrane system. The protein resides in the host nucleus membrane. The protein localises to the host nucleus. It localises to the host cytoplasm. Forms a double layer around the helical nucleocapsid, the inner matrix layer binding to the N helix and the outer matrix layer binding to the envelope glycoprotein. Plays a major role in assembly and budding of virion, by recruiting cellular partners of the ESCRT complexes that play a key role in releasing the budding particle from the host membrane. Condensates the ribonucleocapsid core during virus assembly. Inhibits the host mRNA nuclear export thereby inducing the shut off of cellular transcription and preventing the interferon signaling and the establishment of antiviral state in infected cells. This shutoff presumably inhibits interferon signaling and thus establishment of antiviral state in virus infected cells. Induces cell-rounding, cytoskeleton disorganization and apoptosis in infected cell. Inhibits host transcription, possibly through interaction with host DNA repair factor IIH/TFIIH GTF2H5 subunit. This chain is Matrix protein (M), found in Homo sapiens (Human).